We begin with the raw amino-acid sequence, 175 residues long: UPF0398 protein SPP_0409 (175 aa).

Belongs to the UPF0398 family.

The chain is UPF0398 protein SPP_0409 from Streptococcus pneumoniae (strain P1031).